A 127-amino-acid polypeptide reads, in one-letter code: MNFSKSLLLIAFGGTIGSIFRYLLQYWFGNVLGYSLPWGTLTANLLGSFLIGVVYAISDRFPLFDPQWKFLLASGFCGGFTTFSTFSYETFQMLKSGHYILFLGYICLSVVGGIGFAFAGVWMIKNF.

Helical transmembrane passes span 8–28 (LLIA…QYWF), 37–57 (PWGT…VYAI), 68–88 (WKFL…TFSY), and 100–120 (ILFL…AFAG). Residues glycine 78 and threonine 81 each contribute to the Na(+) site.

The protein belongs to the fluoride channel Fluc/FEX (TC 1.A.43) family.

It is found in the cell inner membrane. The enzyme catalyses fluoride(in) = fluoride(out). Na(+) is not transported, but it plays an essential structural role and its presence is essential for fluoride channel function. Fluoride-specific ion channel. Important for reducing fluoride concentration in the cell, thus reducing its toxicity. In Leptospira interrogans serogroup Icterohaemorrhagiae serovar Lai (strain 56601), this protein is Fluoride-specific ion channel FluC.